The primary structure comprises 777 residues: Protein translocase subunit SecA (777 aa).

Residues Q94, 112-116 (GEGKT), and D501 each bind ATP.

This sequence belongs to the SecA family. In terms of assembly, monomer and homodimer. Part of the essential Sec protein translocation apparatus which comprises SecA, SecYEG and auxiliary proteins SecDF. Other proteins may also be involved.

The protein localises to the cell membrane. It is found in the cytoplasm. The catalysed reaction is ATP + H2O + cellular proteinSide 1 = ADP + phosphate + cellular proteinSide 2.. In terms of biological role, part of the Sec protein translocase complex. Interacts with the SecYEG preprotein conducting channel. Has a central role in coupling the hydrolysis of ATP to the transfer of proteins into and across the cell membrane, serving as an ATP-driven molecular motor driving the stepwise translocation of polypeptide chains across the membrane. This Mycobacterium avium (strain 104) protein is Protein translocase subunit SecA.